A 374-amino-acid polypeptide reads, in one-letter code: Anhydro-N-acetylmuramic acid kinase (374 aa).

12–19 serves as a coordination point for ATP; that stretch reads GTSLDGVD.

The protein belongs to the anhydro-N-acetylmuramic acid kinase family.

It carries out the reaction 1,6-anhydro-N-acetyl-beta-muramate + ATP + H2O = N-acetyl-D-muramate 6-phosphate + ADP + H(+). It participates in amino-sugar metabolism; 1,6-anhydro-N-acetylmuramate degradation. Its pathway is cell wall biogenesis; peptidoglycan recycling. Its function is as follows. Catalyzes the specific phosphorylation of 1,6-anhydro-N-acetylmuramic acid (anhMurNAc) with the simultaneous cleavage of the 1,6-anhydro ring, generating MurNAc-6-P. Is required for the utilization of anhMurNAc either imported from the medium or derived from its own cell wall murein, and thus plays a role in cell wall recycling. The sequence is that of Anhydro-N-acetylmuramic acid kinase from Salmonella arizonae (strain ATCC BAA-731 / CDC346-86 / RSK2980).